A 37-amino-acid polypeptide reads, in one-letter code: Cytochrome b6-f complex subunit 5 (37 aa).

The chain crosses the membrane as a helical span at residues 5–25 (LLSGIVLGLIPITLVGLFVTA).

Belongs to the PetG family. In terms of assembly, the 4 large subunits of the cytochrome b6-f complex are cytochrome b6, subunit IV (17 kDa polypeptide, PetD), cytochrome f and the Rieske protein, while the 4 small subunits are PetG, PetL, PetM and PetN. The complex functions as a dimer.

The protein resides in the plastid. It is found in the chloroplast thylakoid membrane. Its function is as follows. Component of the cytochrome b6-f complex, which mediates electron transfer between photosystem II (PSII) and photosystem I (PSI), cyclic electron flow around PSI, and state transitions. PetG is required for either the stability or assembly of the cytochrome b6-f complex. The sequence is that of Cytochrome b6-f complex subunit 5 from Welwitschia mirabilis (Tree tumbo).